Here is a 124-residue protein sequence, read N- to C-terminus: Acidic phospholipase A2 (124 aa).

7 disulfide bridges follow: C26–C116, C28–C44, C43–C95, C49–C124, C50–C88, C57–C81, and C75–C86. Ca(2+) is bound by residues Y27, G29, and G31. H47 is an active-site residue. Residue D48 participates in Ca(2+) binding. D89 is an active-site residue.

This sequence belongs to the phospholipase A2 family. Group II subfamily. D49 sub-subfamily. Ca(2+) serves as cofactor. Expressed by the venom gland.

The protein resides in the secreted. It catalyses the reaction a 1,2-diacyl-sn-glycero-3-phosphocholine + H2O = a 1-acyl-sn-glycero-3-phosphocholine + a fatty acid + H(+). Snake venom phospholipase A2 (PLA2) that inhibits ADP-induced platelet aggregation. PLA2 catalyzes the calcium-dependent hydrolysis of the 2-acyl groups in 3-sn-phosphoglycerides. This is Acidic phospholipase A2 from Gloydius ussuriensis (Ussuri mamushi).